We begin with the raw amino-acid sequence, 62 residues long: UPF0434 protein RSc2531 (62 aa).

Belongs to the UPF0434 family.

This Ralstonia nicotianae (strain ATCC BAA-1114 / GMI1000) (Ralstonia solanacearum) protein is UPF0434 protein RSc2531.